We begin with the raw amino-acid sequence, 33 residues long: NAD-reducing hydrogenase HoxS subunit gamma (33 aa).

A 2Fe-2S ferredoxin-type domain is found at 1–33; sequence SIEIEIDGVTVTTEESRTLVDVAAEAGVYIPTL.

Belongs to the complex I 75 kDa subunit family. In terms of assembly, tetramer of an alpha and a gamma subunits (flavin-containing dimer), and a delta and a nickel-containing beta subunits (hydrogenase dimer). [4Fe-4S] cluster serves as cofactor.

The protein resides in the cytoplasm. The enzyme catalyses H2 + NAD(+) = NADH + H(+). Subunits alpha and gamma of HoxS constitute an NADH--oxidoreductase. In Rhodococcus opacus (Nocardia opaca), this protein is NAD-reducing hydrogenase HoxS subunit gamma (hoxU).